The chain runs to 356 residues: UDP-N-acetylglucosamine--N-acetylmuramyl-(pentapeptide) pyrophosphoryl-undecaprenol N-acetylglucosamine transferase (356 aa).

Residues 11–13 (TGG), asparagine 117, arginine 160, serine 188, and glutamine 290 each bind UDP-N-acetyl-alpha-D-glucosamine.

This sequence belongs to the glycosyltransferase 28 family. MurG subfamily.

The protein resides in the cell inner membrane. The enzyme catalyses di-trans,octa-cis-undecaprenyl diphospho-N-acetyl-alpha-D-muramoyl-L-alanyl-D-glutamyl-meso-2,6-diaminopimeloyl-D-alanyl-D-alanine + UDP-N-acetyl-alpha-D-glucosamine = di-trans,octa-cis-undecaprenyl diphospho-[N-acetyl-alpha-D-glucosaminyl-(1-&gt;4)]-N-acetyl-alpha-D-muramoyl-L-alanyl-D-glutamyl-meso-2,6-diaminopimeloyl-D-alanyl-D-alanine + UDP + H(+). It participates in cell wall biogenesis; peptidoglycan biosynthesis. In terms of biological role, cell wall formation. Catalyzes the transfer of a GlcNAc subunit on undecaprenyl-pyrophosphoryl-MurNAc-pentapeptide (lipid intermediate I) to form undecaprenyl-pyrophosphoryl-MurNAc-(pentapeptide)GlcNAc (lipid intermediate II). This chain is UDP-N-acetylglucosamine--N-acetylmuramyl-(pentapeptide) pyrophosphoryl-undecaprenol N-acetylglucosamine transferase, found in Rickettsia bellii (strain RML369-C).